A 76-amino-acid chain; its full sequence is Vasotab-TY2 (76 aa).

An N-terminal signal peptide occupies residues 1–21; sequence MKFALFSVLVLMLIATFVAAD. Residues 22-76 form the Kazal-like domain; the sequence is DCPRICTADYTPVCGTPSGGRRSANRTFANQCGLDSHNCLNKGATYDKLHDGECK. 3 disulfides stabilise this stretch: C23-C60, C27-C53, and C35-C75.

As to expression, expressed by the salivary gland.

The protein localises to the secreted. Vasodilator protein that inhibits vasoconstriction of isolated rat femoral artery induced by phenylephrine. Since platelet aggregation and vasoconstriction are key hemostatic responses, particularly in small wounds, this protein likely participates in the antihemostatic responses during blood feeding. Blocks L-type calcium channels (Cav1/CACNA1) in left ventricular myocytes isolated from rat hearts. This chain is Vasotab-TY2, found in Tabanus yao (Horsefly).